The following is a 383-amino-acid chain: Xylose/arabinose import ATP-binding protein XacK (383 aa).

The ABC transporter domain occupies 4-240 (LTLDDVTKVY…PNNLFVAGFI (237 aa)). ATP is bound at residue 41-48 (GPSGCGKS).

The protein belongs to the ABC transporter superfamily. Carbohydrate uptake transporter-1 (CUT1) (TC 3.A.1.1) family. The complex is composed of two ATP-binding proteins (XacJ and XacK), two transmembrane proteins (XacH and XacI) and a solute-binding protein (XacG).

The protein resides in the cell membrane. It carries out the reaction D-xylose(out) + ATP + H2O = D-xylose(in) + ADP + phosphate + H(+). It catalyses the reaction L-arabinose(out) + ATP + H2O = L-arabinose(in) + ADP + phosphate + H(+). Part of the ABC transporter complex XacGHIJK involved in the uptake of xylose and arabinose. Responsible for energy coupling to the transport system. This chain is Xylose/arabinose import ATP-binding protein XacK, found in Haloferax volcanii (strain ATCC 29605 / DSM 3757 / JCM 8879 / NBRC 14742 / NCIMB 2012 / VKM B-1768 / DS2) (Halobacterium volcanii).